Reading from the N-terminus, the 170-residue chain is Adenine phosphoribosyltransferase (170 aa).

This sequence belongs to the purine/pyrimidine phosphoribosyltransferase family. As to quaternary structure, homodimer.

Its subcellular location is the cytoplasm. It carries out the reaction AMP + diphosphate = 5-phospho-alpha-D-ribose 1-diphosphate + adenine. The protein operates within purine metabolism; AMP biosynthesis via salvage pathway; AMP from adenine: step 1/1. Functionally, catalyzes a salvage reaction resulting in the formation of AMP, that is energically less costly than de novo synthesis. The chain is Adenine phosphoribosyltransferase from Cyanothece sp. (strain PCC 7425 / ATCC 29141).